Consider the following 284-residue polypeptide: RNA polymerase sigma factor RpoH (284 aa).

The sigma-70 factor domain-2 stretch occupies residues 53 to 122 (LILSHLRFVI…IHEYVLRNWR (70 aa)). The short motif at 77–80 (DLIQ) is the Interaction with polymerase core subunit RpoC element. A sigma-70 factor domain-4 region spans residues 228–280 (ALLRLDERSRHIIHARWLDKNKKNTLQNIANNYGISAERVRQLEKNAMKKLKL). The H-T-H motif DNA-binding region spans 253-272 (LQNIANNYGISAERVRQLEK).

Belongs to the sigma-70 factor family. RpoH subfamily. Interacts with the RNA polymerase core enzyme.

It is found in the cytoplasm. In terms of biological role, sigma factors are initiation factors that promote the attachment of RNA polymerase to specific initiation sites and are then released. This sigma factor is involved in regulation of expression of heat shock genes. The sequence is that of RNA polymerase sigma factor RpoH from Buchnera aphidicola subsp. Acyrthosiphon pisum (strain APS) (Acyrthosiphon pisum symbiotic bacterium).